Consider the following 230-residue polypeptide: 2,3-bisphosphoglycerate-dependent phosphoglycerate mutase (230 aa).

Residues 10–17 (RHGESKWN), 23–24 (TG), arginine 62, 89–92 (ERNY), lysine 100, 116–117 (RR), and 185–186 (GN) each bind substrate. Histidine 11 serves as the catalytic Tele-phosphohistidine intermediate. The active-site Proton donor/acceptor is the glutamate 89.

The protein belongs to the phosphoglycerate mutase family. BPG-dependent PGAM subfamily. Homodimer.

It catalyses the reaction (2R)-2-phosphoglycerate = (2R)-3-phosphoglycerate. The protein operates within carbohydrate degradation; glycolysis; pyruvate from D-glyceraldehyde 3-phosphate: step 3/5. Functionally, catalyzes the interconversion of 2-phosphoglycerate and 3-phosphoglycerate. This is 2,3-bisphosphoglycerate-dependent phosphoglycerate mutase from Buchnera aphidicola subsp. Cinara cedri (strain Cc).